A 39-amino-acid chain; its full sequence is Natriuretic peptide NsNP-b (39 aa).

Positions Ser1 to Ile8 are excised as a propeptide. A disulfide bond links Cys12 and Cys28. Positions Arg19–Ser39 are disordered.

It belongs to the natriuretic peptide family. Expressed by the venom gland.

It is found in the secreted. In terms of biological role, snake venom natriuretic peptide that targets both NPR1 and NPR2. Exhibits hypotensive and vasodepressor activities. The chain is Natriuretic peptide NsNP-b from Notechis scutatus scutatus (Mainland tiger snake).